The sequence spans 493 residues: Guanosine-5'-triphosphate,3'-diphosphate pyrophosphatase (493 aa).

Belongs to the GppA/Ppx family. GppA subfamily.

It catalyses the reaction guanosine 3'-diphosphate 5'-triphosphate + H2O = guanosine 3',5'-bis(diphosphate) + phosphate + H(+). It participates in purine metabolism; ppGpp biosynthesis; ppGpp from GTP: step 2/2. Catalyzes the conversion of pppGpp to ppGpp. Guanosine pentaphosphate (pppGpp) is a cytoplasmic signaling molecule which together with ppGpp controls the 'stringent response', an adaptive process that allows bacteria to respond to amino acid starvation, resulting in the coordinated regulation of numerous cellular activities. In Salmonella heidelberg (strain SL476), this protein is Guanosine-5'-triphosphate,3'-diphosphate pyrophosphatase.